Here is a 398-residue protein sequence, read N- to C-terminus: Sex hormone-binding globulin (398 aa).

Residues 1-31 (MATPPLVPLLLLLLLLLPHAHHRLALRSVLA) form the signal peptide. Laminin G-like domains follow at residues 41 to 213 (VHLI…RRSC) and 220 to 386 (GIFF…THSC). Disulfide bonds link C189-C213 and C358-C386. 2 N-linked (GlcNAc...) asparagine glycosylation sites follow: N376 and N392.

In terms of assembly, homodimer.

It is found in the secreted. Functions as an androgen transport protein, but may also be involved in receptor mediated processes. Each dimer binds one molecule of steroid. Specific for 5-alpha-dihydrotestosterone, testosterone, and 17-beta-estradiol. Regulates the plasma metabolic clearance rate of steroid hormones by controlling their plasma concentration. This Oryctolagus cuniculus (Rabbit) protein is Sex hormone-binding globulin (SHBG).